The sequence spans 280 residues: Probable endonuclease 4 (280 aa).

His69, His109, Glu145, Asp179, His182, His216, Asp229, His231, and Glu261 together coordinate Zn(2+).

This sequence belongs to the AP endonuclease 2 family. Zn(2+) serves as cofactor.

It carries out the reaction Endonucleolytic cleavage to 5'-phosphooligonucleotide end-products.. In terms of biological role, endonuclease IV plays a role in DNA repair. It cleaves phosphodiester bonds at apurinic or apyrimidinic (AP) sites, generating a 3'-hydroxyl group and a 5'-terminal sugar phosphate. The chain is Probable endonuclease 4 from Pelodictyon phaeoclathratiforme (strain DSM 5477 / BU-1).